A 333-amino-acid polypeptide reads, in one-letter code: MRPILLQGHERSITQIKYNREGDLLFTVAKDPIVNVWYSVNGERLGTYMGHTGAVWCVDADWDTKHVLTGSADNSCRLWDCETGKQLALLKTNSAVRTCGFDFGGNIIMFSTDKQMGYQCFVSFFDLRDPSQIDNNEPYMKIPCNDSKITSAVWGPLGECIIAGHESGELNQYSAKSGEVLVNVKEHSRQINDIQLSREMTMFVTASKDNTAKLFDSTTLEHQKTFRTEPPRELAALSPNYEHVVVGGGQEAMDVTTTSTRIGKFEARFFHLAFEEEFGRVKGHFGPINSVAFHPDGKSYSSGGEDGYVRIHYFDPQYFEFEFEAREAGSPSG.

WD repeat units lie at residues 8–47 (GHER…RLGT), 50–91 (GHTG…ALLK), 144–183 (CNDS…VLVN), and 186–225 (EHSR…HQKT). A Phosphothreonine modification is found at Thr-219. Lys-264 is modified (N6-acetyllysine). A Glycyl lysine isopeptide (Lys-Gly) (interchain with G-Cter in ubiquitin) cross-link involves residue Lys-282. The WD 5 repeat unit spans residues 283 to 324 (GHFGPINSVAFHPDGKSYSSGGEDGYVRIHYFDPQYFEFEFE). The residue at position 308 (Tyr-308) is a Phosphotyrosine.

It belongs to the eIF-3 subunit I family. Component of the eukaryotic translation initiation factor 3 (eIF-3) complex, which is composed of 13 subunits: EIF3A, EIF3B, EIF3C, EIF3D, EIF3E, EIF3F, EIF3G, EIF3H, EIF3I, EIF3J, EIF3K, EIF3L and EIF3M. The eIF-3 complex appears to include 3 stable modules: module A is composed of EIF3A, EIF3B, EIF3G and EIF3I; module B is composed of EIF3F, EIF3H, and EIF3M; and module C is composed of EIF3C, EIF3D, EIF3E, EIF3K and EIF3L. EIF3C of module C binds EIF3B of module A and EIF3H of module B, thereby linking the three modules. EIF3J is a labile subunit that binds to the eIF-3 complex via EIF3B. The eIF-3 complex interacts with RPS6KB1 under conditions of nutrient depletion. Mitogenic stimulation leads to binding and activation of a complex composed of MTOR and RPTOR, leading to phosphorylation and release of RPS6KB1 and binding of EIF4B to eIF-3. In terms of processing, phosphorylated by TGF-beta type II receptor.

It localises to the cytoplasm. In terms of biological role, component of the eukaryotic translation initiation factor 3 (eIF-3) complex, which is required for several steps in the initiation of protein synthesis. The eIF-3 complex associates with the 40S ribosome and facilitates the recruitment of eIF-1, eIF-1A, eIF-2:GTP:methionyl-tRNAi and eIF-5 to form the 43S pre-initiation complex (43S PIC). The eIF-3 complex stimulates mRNA recruitment to the 43S PIC and scanning of the mRNA for AUG recognition. The eIF-3 complex is also required for disassembly and recycling of post-termination ribosomal complexes and subsequently prevents premature joining of the 40S and 60S ribosomal subunits prior to initiation. The eIF-3 complex specifically targets and initiates translation of a subset of mRNAs involved in cell proliferation, including cell cycling, differentiation and apoptosis, and uses different modes of RNA stem-loop binding to exert either translational activation or repression. The protein is Eukaryotic translation initiation factor 3 subunit I of Oryctolagus cuniculus (Rabbit).